Reading from the N-terminus, the 507-residue chain is Bifunctional purine biosynthesis protein PurH (507 aa).

An MGS-like domain is found at 1–144; sequence MKRALLSVSD…KNSDSVWAVV (144 aa).

It belongs to the PurH family.

It catalyses the reaction (6R)-10-formyltetrahydrofolate + 5-amino-1-(5-phospho-beta-D-ribosyl)imidazole-4-carboxamide = 5-formamido-1-(5-phospho-D-ribosyl)imidazole-4-carboxamide + (6S)-5,6,7,8-tetrahydrofolate. It carries out the reaction IMP + H2O = 5-formamido-1-(5-phospho-D-ribosyl)imidazole-4-carboxamide. It participates in purine metabolism; IMP biosynthesis via de novo pathway; 5-formamido-1-(5-phospho-D-ribosyl)imidazole-4-carboxamide from 5-amino-1-(5-phospho-D-ribosyl)imidazole-4-carboxamide (10-formyl THF route): step 1/1. The protein operates within purine metabolism; IMP biosynthesis via de novo pathway; IMP from 5-formamido-1-(5-phospho-D-ribosyl)imidazole-4-carboxamide: step 1/1. The polypeptide is Bifunctional purine biosynthesis protein PurH (Lacticaseibacillus paracasei (strain ATCC 334 / BCRC 17002 / CCUG 31169 / CIP 107868 / KCTC 3260 / NRRL B-441) (Lactobacillus paracasei)).